The primary structure comprises 419 residues: UDP-N-acetylglucosamine 1-carboxyvinyltransferase 1 (419 aa).

22 to 23 (KN) is a phosphoenolpyruvate binding site. R92 contacts UDP-N-acetyl-alpha-D-glucosamine. The Proton donor role is filled by C116. C116 is modified (2-(S-cysteinyl)pyruvic acid O-phosphothioketal). UDP-N-acetyl-alpha-D-glucosamine is bound by residues 121–125 (RPIDL), D306, and I328.

It belongs to the EPSP synthase family. MurA subfamily.

It localises to the cytoplasm. It catalyses the reaction phosphoenolpyruvate + UDP-N-acetyl-alpha-D-glucosamine = UDP-N-acetyl-3-O-(1-carboxyvinyl)-alpha-D-glucosamine + phosphate. It participates in cell wall biogenesis; peptidoglycan biosynthesis. In terms of biological role, cell wall formation. Adds enolpyruvyl to UDP-N-acetylglucosamine. This chain is UDP-N-acetylglucosamine 1-carboxyvinyltransferase 1, found in Streptococcus agalactiae serotype Ia (strain ATCC 27591 / A909 / CDC SS700).